Reading from the N-terminus, the 94-residue chain is Pyrimidine/purine nucleoside phosphorylase (94 aa).

Belongs to the nucleoside phosphorylase PpnP family.

It catalyses the reaction a purine D-ribonucleoside + phosphate = a purine nucleobase + alpha-D-ribose 1-phosphate. The enzyme catalyses adenosine + phosphate = alpha-D-ribose 1-phosphate + adenine. The catalysed reaction is cytidine + phosphate = cytosine + alpha-D-ribose 1-phosphate. It carries out the reaction guanosine + phosphate = alpha-D-ribose 1-phosphate + guanine. It catalyses the reaction inosine + phosphate = alpha-D-ribose 1-phosphate + hypoxanthine. The enzyme catalyses thymidine + phosphate = 2-deoxy-alpha-D-ribose 1-phosphate + thymine. The catalysed reaction is uridine + phosphate = alpha-D-ribose 1-phosphate + uracil. It carries out the reaction xanthosine + phosphate = alpha-D-ribose 1-phosphate + xanthine. Catalyzes the phosphorolysis of diverse nucleosides, yielding D-ribose 1-phosphate and the respective free bases. Can use uridine, adenosine, guanosine, cytidine, thymidine, inosine and xanthosine as substrates. Also catalyzes the reverse reactions. In Pectobacterium atrosepticum (strain SCRI 1043 / ATCC BAA-672) (Erwinia carotovora subsp. atroseptica), this protein is Pyrimidine/purine nucleoside phosphorylase.